We begin with the raw amino-acid sequence, 75 residues long: Large ribosomal subunit protein bL31 (75 aa).

4 residues coordinate Zn(2+): Cys-16, Cys-18, Cys-37, and Cys-40.

Belongs to the bacterial ribosomal protein bL31 family. Type A subfamily. In terms of assembly, part of the 50S ribosomal subunit. Zn(2+) is required as a cofactor.

Its function is as follows. Binds the 23S rRNA. The protein is Large ribosomal subunit protein bL31 of Pseudomonas syringae pv. tomato (strain ATCC BAA-871 / DC3000).